Reading from the N-terminus, the 232-residue chain is MPRPPPPPPPGRGAPGARRPMREFFAAWLSTLRSPLLPLLRRALSSSSSSSSGGWDDPLSSAAAAVEAHFQAHWSALDAAARQDPAQAVSAGDWRSPLELPFLWVGDLHPSLVTSLLRSLSPSPRLLAATDRVDRRIRAAVPSISDRLRRVQEAFISAEVSGAADVEAFLEELKDVALDANRLRRGVLSELVAAAGGYQAALFLEALSRFVLSMHDPEVLRRFDQCRASPGS.

Interacts with LECRKS7/DAF1.

The protein resides in the cytoplasm. Its function is as follows. Required for pollen aperture formation, male fertility and LECRKS7/DAF1 function. Seems to be involved in operculum protrusion. Participates in the modification of plasma membrane at future aperture sites, possibly by creating close contact between the plasma membrane and callose wall to prevent primexine formation and sporopollenin deposition. In Oryza sativa subsp. japonica (Rice), this protein is Protein INAPERTURATE POLLEN 1 homolog.